Consider the following 460-residue polypeptide: Probable serine/threonine-protein kinase kinase DDB_G0280557 (460 aa).

A Protein kinase domain is found at 102–416; the sequence is INLKSITDCG…IDQLLAHKYF (315 aa). ATP-binding positions include K131 and 154-162; that span reads QRHFQQHPL. D250 acts as the Proton acceptor in catalysis.

This sequence belongs to the protein kinase superfamily. CMGC Ser/Thr protein kinase family. MAP kinase subfamily.

The enzyme catalyses L-seryl-[protein] + ATP = O-phospho-L-seryl-[protein] + ADP + H(+). It catalyses the reaction L-threonyl-[protein] + ATP = O-phospho-L-threonyl-[protein] + ADP + H(+). This Dictyostelium discoideum (Social amoeba) protein is Probable serine/threonine-protein kinase kinase DDB_G0280557.